We begin with the raw amino-acid sequence, 309 residues long: Anamorsin (309 aa).

An N-terminal SAM-like domain region spans residues Ile-6–Ser-172. The linker stretch occupies residues Gln-173–Leu-222. Phosphoserine occurs at positions 182, 183, and 213. Positions 235, 244, 247, and 249 each coordinate [2Fe-2S] cluster. Residues Cys-235–Cys-249 are fe-S binding site A. A Phosphoserine modification is found at Ser-269. [4Fe-4S] cluster is bound by residues Cys-271, Cys-274, Cys-282, and Cys-285. 2 short sequence motifs (cx2C motif) span residues Cys-271–Cys-274 and Cys-282–Cys-285. A fe-S binding site B region spans residues Cys-271–Cys-285. Phosphoserine is present on residues Ser-302 and Ser-304.

It belongs to the anamorsin family. In terms of assembly, monomer. Interacts with NDOR1. Interacts with CHCHD4. [2Fe-2S] cluster is required as a cofactor. It depends on [4Fe-4S] cluster as a cofactor.

The protein localises to the cytoplasm. It is found in the nucleus. The protein resides in the mitochondrion intermembrane space. In terms of biological role, component of the cytosolic iron-sulfur (Fe-S) protein assembly (CIA) machinery required for the maturation of extramitochondrial Fe-S proteins. Part of an electron transfer chain functioning in an early step of cytosolic Fe-S biogenesis, facilitating the de novo assembly of a [4Fe-4S] cluster on the scaffold complex NUBP1-NUBP2. Electrons are transferred to CIAPIN1 from NADPH via the FAD- and FMN-containing protein NDOR1. NDOR1-CIAPIN1 are also required for the assembly of the diferric tyrosyl radical cofactor of ribonucleotide reductase (RNR), probably by providing electrons for reduction during radical cofactor maturation in the catalytic small subunit. Has anti-apoptotic effects in the cell. Involved in negative control of cell death upon cytokine withdrawal. Promotes development of hematopoietic cells. The protein is Anamorsin of Rattus norvegicus (Rat).